A 386-amino-acid polypeptide reads, in one-letter code: Heat-inducible transcription repressor HrcA (386 aa).

The protein belongs to the HrcA family.

Its function is as follows. Negative regulator of class I heat shock genes (grpE-dnaK-dnaJ and groELS operons). Prevents heat-shock induction of these operons. The polypeptide is Heat-inducible transcription repressor HrcA (Chlamydia abortus (strain DSM 27085 / S26/3) (Chlamydophila abortus)).